Reading from the N-terminus, the 130-residue chain is Small ribosomal subunit protein uS8 (130 aa).

The protein belongs to the universal ribosomal protein uS8 family. In terms of assembly, part of the 30S ribosomal subunit. Contacts proteins S5 and S12.

Functionally, one of the primary rRNA binding proteins, it binds directly to 16S rRNA central domain where it helps coordinate assembly of the platform of the 30S subunit. This Klebsiella pneumoniae subsp. pneumoniae (strain ATCC 700721 / MGH 78578) protein is Small ribosomal subunit protein uS8.